Reading from the N-terminus, the 232-residue chain is Large ribosomal subunit protein uL1 (232 aa).

Belongs to the universal ribosomal protein uL1 family. In terms of assembly, part of the 50S ribosomal subunit.

Binds directly to 23S rRNA. The L1 stalk is quite mobile in the ribosome, and is involved in E site tRNA release. Functionally, protein L1 is also a translational repressor protein, it controls the translation of the L11 operon by binding to its mRNA. In Bacillus pumilus (strain SAFR-032), this protein is Large ribosomal subunit protein uL1.